The sequence spans 375 residues: 2-isopropylmalate synthase (375 aa).

The Pyruvate carboxyltransferase domain maps to 1-124 (GRTSIDNLCR…FTNIKHNELY (124 aa)). Mn(2+) is bound by residues histidine 59, histidine 61, and asparagine 95. A regulatory domain region spans residues 250-375 (QLKYFSIHSG…SKIKNIKNKK (126 aa)).

The protein belongs to the alpha-IPM synthase/homocitrate synthase family. LeuA type 1 subfamily. As to quaternary structure, homodimer.

Its subcellular location is the cytoplasm. The catalysed reaction is 3-methyl-2-oxobutanoate + acetyl-CoA + H2O = (2S)-2-isopropylmalate + CoA + H(+). It functions in the pathway amino-acid biosynthesis; L-leucine biosynthesis; L-leucine from 3-methyl-2-oxobutanoate: step 1/4. Its function is as follows. Catalyzes the condensation of the acetyl group of acetyl-CoA with 3-methyl-2-oxobutanoate (2-ketoisovalerate) to form 3-carboxy-3-hydroxy-4-methylpentanoate (2-isopropylmalate). This chain is 2-isopropylmalate synthase, found in Buchnera aphidicola subsp. Thelaxes suberi.